A 535-amino-acid polypeptide reads, in one-letter code: Succinate-semialdehyde dehydrogenase, mitochondrial (535 aa).

The N-terminal 47 residues, 1-47 (MATCIWLRSCGARRLGSTFPGCRLRPRAGGLVPASGPAPGPAQLRCY), are a transit peptide targeting the mitochondrion. At lysine 126 the chain carries N6-acetyllysine; alternate. N6-succinyllysine; alternate is present on lysine 126. Lysine 135 and lysine 184 each carry N6-succinyllysine. 202 to 204 (TPW) contributes to the NAD(+) binding site. Arginine 213 is a substrate binding site. 228 to 231 (KPAE) is an NAD(+) binding site. Lysine 265 is modified (N6-acetyllysine; alternate). N6-succinyllysine; alternate is present on lysine 265. NAD(+) is bound by residues 284–289 (GSTTTG) and glutamate 306. Glutamate 306 serves as the catalytic Proton acceptor. Arginine 334 is a binding site for substrate. Cysteine 340 (nucleophile) is an active-site residue. An intrachain disulfide couples cysteine 340 to cysteine 342. Residue lysine 365 is modified to N6-acetyllysine. N6-succinyllysine is present on lysine 402. N6-acetyllysine is present on lysine 411. Residue 438–440 (ETF) coordinates NAD(+). A substrate-binding site is contributed by serine 498. Serine 499 is subject to Phosphoserine.

The protein belongs to the aldehyde dehydrogenase family. Homotetramer. In terms of tissue distribution, brain, pancreas, heart, liver, skeletal muscle and kidney. Lower in placenta.

It is found in the mitochondrion. It carries out the reaction succinate semialdehyde + NAD(+) + H2O = succinate + NADH + 2 H(+). It functions in the pathway amino-acid degradation; 4-aminobutanoate degradation. With respect to regulation, redox-regulated. Inhibited under oxydizing conditions. Inhibited by hydrogen peroxide H(2)O(2). In terms of biological role, catalyzes one step in the degradation of the inhibitory neurotransmitter gamma-aminobutyric acid (GABA). This chain is Succinate-semialdehyde dehydrogenase, mitochondrial, found in Homo sapiens (Human).